The chain runs to 203 residues: Tic20 family protein Ycf60 (203 aa).

5 helical membrane passes run 2-22, 51-71, 84-104, 131-151, and 153-173; these read IRLF…RLAI, IIPY…YVLP, ILLP…VTFF, ILLF…PIEF, and ISFI…STIT.

The protein belongs to the Tic20 family.

Its subcellular location is the plastid. It is found in the chloroplast membrane. The chain is Tic20 family protein Ycf60 (ycf60) from Porphyra purpurea (Red seaweed).